The sequence spans 507 residues: Steroid (22S)-hydroxylase (507 aa).

Residues 12–32 form a helical membrane-spanning segment; that stretch reads LLFFLPYILLALLTFYTTTVA. C444 contacts heme.

It belongs to the cytochrome P450 family. The cofactor is heme.

It is found in the membrane. It carries out the reaction a C27-steroid + reduced [NADPH--hemoprotein reductase] + O2 = a (22S)-22-hydroxy C27-steroid + oxidized [NADPH--hemoprotein reductase] + H2O + H(+). The enzyme catalyses a C28-steroid + reduced [NADPH--hemoprotein reductase] + O2 = a (22S)-22-hydroxy C28-steroid + oxidized [NADPH--hemoprotein reductase] + H2O + H(+). It catalyses the reaction campesterol + reduced [NADPH--hemoprotein reductase] + O2 = (22S)-22-hydroxycampesterol + oxidized [NADPH--hemoprotein reductase] + H2O + H(+). The catalysed reaction is campestanol + reduced [NADPH--hemoprotein reductase] + O2 = 6-deoxycathasterone + oxidized [NADPH--hemoprotein reductase] + H2O + H(+). Its pathway is plant hormone biosynthesis; brassinosteroid biosynthesis. In terms of biological role, involved in reduction steps of the biosynthesis of plant campesterol-derivative steroids, ending to castasterone (CS) but missing brassinolide (BL). Catalyzes the conversion of campesterol (CR) to (22S)-22-hydroxycampesterol (22-OHCR, 22-hydroxyCR) and of campestanol (CN) to 6-deoxycathasterone (6-deoxoCT). This is Steroid (22S)-hydroxylase from Brachypodium distachyon (Purple false brome).